Consider the following 2149-residue polypeptide: Serine/threonine-protein kinase WNK2 (2149 aa).

Basic and acidic residues predominate over residues 1 to 10; the sequence is MDGDGGRRDA. 2 disordered regions span residues 1-75 and 87-183; these read MDGD…QRRV and ERAR…EDDL. An omega-N-methylarginine mark is found at Arg19 and Arg30. Ser45 is modified (phosphoserine). The segment covering 95–114 has biased composition (pro residues); that stretch reads APAPAAPAAPPGSPSVPSDP. Basic and acidic residues predominate over residues 161-172; that stretch reads AKPEPGRARKDE. Acidic residues predominate over residues 173–182; it reads PEEEEDDEDD. The Protein kinase domain occupies 195–453; the sequence is LKFDIELGRG…IKDLLSHAFF (259 aa). Residues Ser205, 275–278, and Lys325 contribute to the ATP site; that span reads TELM. Residue Asp342 is the Proton acceptor of the active site. Phosphoserine; by autocatalysis occurs at positions 352 and 356. Ser560 is subject to Phosphoserine. 3 disordered regions span residues 578-630, 703-728, and 1067-1133; these read HAQS…DSQS, SMSFTPVLPPPSTPVPTGPSQPAPPV, and QEEQ…ERAS. Residues 605–625 show a composition bias toward polar residues; the sequence is ASVTSLASDSTFDSGQGSTVY. The span at 709–728 shows a compositional bias: pro residues; it reads VLPPPSTPVPTGPSQPAPPV. The segment covering 1081 to 1092 has biased composition (polar residues); the sequence is QSSESFGGSDVT. Residue Ser1098 is modified to Phosphoserine. The segment covering 1115 to 1126 has biased composition (basic residues); that stretch reads ARKHHRRSTRAR. Residue Ser1210 is modified to Phosphoserine. Disordered stretches follow at residues 1211–1234 and 1270–1502; these read EDTDADHGSDTGTSPPHLGTCGLA and PATD…GFVD. 2 stretches are compositionally biased toward low complexity: residues 1275 to 1292 and 1317 to 1353; these read SESSPPLPLSSLQPEASQ and SQAGSSNPPGGASAPLAPSSPPVTTVIPAAPATSTVP. Positions 1386–1400 are enriched in polar residues; sequence RSAQCTAQPLSTGQG. A compositionally biased stretch (pro residues) spans 1470–1485; it reads LPSPPLGPTAPPPPPS. A phosphoserine mark is found at Ser1507, Ser1566, and Ser1594. Disordered regions lie at residues 1521–1727 and 1739–1778; these read VPTS…PSSP and ASSIEVGVEEPASSDSGDERPRRRSQVQKQSSLPGTGGVA. The segment covering 1553-1567 has biased composition (polar residues); it reads SDKTPSLTQQTQPSL. A compositionally biased stretch (low complexity) spans 1587–1597; the sequence is SSPMTAESSSS. Positions 1610–1629 are enriched in polar residues; the sequence is ASDSSTAPSVPQDASGSSVP. Ser1725, Ser1726, Ser1770, and Ser1797 each carry phosphoserine. The segment covering 1916-1928 has biased composition (polar residues); the sequence is ASSTGHLSDSSRG. The tract at residues 1916 to 1947 is disordered; sequence ASSTGHLSDSSRGPPTKDPRGTKAVQTQQPCS. Ser1962 carries the post-translational modification Phosphoserine. Residues 2018–2031 are compositionally biased toward polar residues; the sequence is SSLYDSPGSSTSSL. Disordered regions lie at residues 2018–2044 and 2122–2149; these read SSLYDSPGSSTSSLAPGPEPGPQPTLH and GPLSTTATPGATPALPVPIPDPESEKPD. Positions 2122-2135 are enriched in low complexity; it reads GPLSTTATPGATPA.

This sequence belongs to the protein kinase superfamily. Ser/Thr protein kinase family. WNK subfamily. In terms of assembly, forms a complex with the phosphorylated form of STK39 in the brain. The cofactor is Mg(2+). Autophosphorylated. Autophosphorylation at Ser-352 and Ser-356 promotes its activity. As to expression, brain and heart.

The protein resides in the cytoplasm. It localises to the cell membrane. The enzyme catalyses L-seryl-[protein] + ATP = O-phospho-L-seryl-[protein] + ADP + H(+). It carries out the reaction L-threonyl-[protein] + ATP = O-phospho-L-threonyl-[protein] + ADP + H(+). Its activity is regulated as follows. Activation requires autophosphorylation of Ser-356 and, to a lower extent, Ser-352. Serine/threonine-protein kinase component of the WNK2-SPAK/OSR1 kinase cascade, which plays an important role in the regulation of electrolyte homeostasis, cell signaling, survival, and proliferation. The WNK2-SPAK/OSR1 kinase cascade is composed of WNK2, which mediates phosphorylation and activation of downstream kinases OXSR1/OSR1 and STK39/SPAK. Following activation, OXSR1/OSR1 and STK39/SPAK catalyze phosphorylation of ion cotransporters, regulating their activity. Acts as an activator and inhibitor of sodium-coupled chloride cotransporters and potassium-coupled chloride cotransporters respectively. Activates SLC12A2, SCNN1A, SCNN1B, SCNN1D and SGK1 and inhibits SLC12A5. Negatively regulates the EGF-induced activation of the ERK/MAPK-pathway and the downstream cell cycle progression. Affects MAPK3/MAPK1 activity by modulating the activity of MAP2K1 and this modulation depends on phosphorylation of MAP2K1 by PAK1. WNK2 acts by interfering with the activity of PAK1 by controlling the balance of the activity of upstream regulators of PAK1 activity, RHOA and RAC1, which display reciprocal activity. This is Serine/threonine-protein kinase WNK2 from Mus musculus (Mouse).